A 704-amino-acid polypeptide reads, in one-letter code: Polyribonucleotide nucleotidyltransferase (704 aa).

Aspartate 488 and aspartate 494 together coordinate Mg(2+). In terms of domain architecture, KH spans 555-614; it reads PRITTIKINPEKIRDVIGKGGATIRALTEETGTTIELDDDGTVKIASSNGEATKEAIRRI. The S1 motif domain maps to 624-692; the sequence is GTVYNGKVVR…RQGRVRLSMK (69 aa).

Belongs to the polyribonucleotide nucleotidyltransferase family. Component of the RNA degradosome, which is a multiprotein complex involved in RNA processing and mRNA degradation. The cofactor is Mg(2+).

It is found in the cytoplasm. The catalysed reaction is RNA(n+1) + phosphate = RNA(n) + a ribonucleoside 5'-diphosphate. Its function is as follows. Involved in mRNA degradation. Catalyzes the phosphorolysis of single-stranded polyribonucleotides processively in the 3'- to 5'-direction. The polypeptide is Polyribonucleotide nucleotidyltransferase (Shewanella pealeana (strain ATCC 700345 / ANG-SQ1)).